The primary structure comprises 116 residues: MRRKIVKIKKSYEFKKVYSNGKSVANQFVVMYYMENNLGFNRVGYSVSKKIGKSVVRNRVRRLLHESFRLLDIEIKTGFDIIFVARGKIVEADFHTLKNSMRKLIMKTPLYAGNEK.

This sequence belongs to the RnpA family. As to quaternary structure, consists of a catalytic RNA component (M1 or rnpB) and a protein subunit.

It catalyses the reaction Endonucleolytic cleavage of RNA, removing 5'-extranucleotides from tRNA precursor.. Its function is as follows. RNaseP catalyzes the removal of the 5'-leader sequence from pre-tRNA to produce the mature 5'-terminus. It can also cleave other RNA substrates such as 4.5S RNA. The protein component plays an auxiliary but essential role in vivo by binding to the 5'-leader sequence and broadening the substrate specificity of the ribozyme. The protein is Ribonuclease P protein component of Thermoanaerobacter pseudethanolicus (strain ATCC 33223 / 39E) (Clostridium thermohydrosulfuricum).